The sequence spans 377 residues: Nitric oxide reductase FlRd-NAD(+) reductase (377 aa).

The protein belongs to the FAD-dependent oxidoreductase family. FAD is required as a cofactor.

The protein resides in the cytoplasm. It carries out the reaction 2 reduced [nitric oxide reductase rubredoxin domain] + NAD(+) + H(+) = 2 oxidized [nitric oxide reductase rubredoxin domain] + NADH. It participates in nitrogen metabolism; nitric oxide reduction. One of at least two accessory proteins for anaerobic nitric oxide (NO) reductase. Reduces the rubredoxin moiety of NO reductase. The polypeptide is Nitric oxide reductase FlRd-NAD(+) reductase (Salmonella gallinarum (strain 287/91 / NCTC 13346)).